A 378-amino-acid chain; its full sequence is Cytochrome b (378 aa).

Helical transmembrane passes span 33 to 53, 77 to 98, 113 to 133, and 178 to 198; these read FGSL…FLAM, WLIR…YLHI, WNTG…GYVL, and FFAF…LHFL. Positions 83 and 97 each coordinate heme b. Positions 182 and 196 each coordinate heme b. H201 provides a ligand contact to a ubiquinone. A run of 4 helical transmembrane segments spans residues 226 to 246, 288 to 308, 320 to 340, and 347 to 367; these read YKDL…AVFS, LGGV…PFLH, WSQL…WIGG, and LTTV…FLMP.

It belongs to the cytochrome b family. In terms of assembly, the cytochrome bc1 complex contains 3 respiratory subunits (MT-CYB, CYC1 and UQCRFS1), 2 core proteins (UQCRC1 and UQCRC2) and probably 6 low-molecular weight proteins. It depends on heme b as a cofactor.

It is found in the mitochondrion inner membrane. Its function is as follows. Component of the ubiquinol-cytochrome c reductase complex (complex III or cytochrome b-c1 complex) that is part of the mitochondrial respiratory chain. The b-c1 complex mediates electron transfer from ubiquinol to cytochrome c. Contributes to the generation of a proton gradient across the mitochondrial membrane that is then used for ATP synthesis. This Indostomus paradoxus (Armoured stickleback) protein is Cytochrome b (mt-cyb).